A 447-amino-acid polypeptide reads, in one-letter code: MSQSKADYINVIGAGLAGSEAAYQIAKRGIPVKLYEMRGVKATPQHKTTNFAELVCSNSFRGDSLTNAVGLLKEEMRRLDSIIMRNGEAHRVPAGGAMAVDREGYAEAVTAEIESHPLIEVIREEITEIPDDAITVIASGPLTSDALAEKIHELNGGDGFYFYDAAAPIVDKATIDMNKVYLKSRYDKGEAAYLNCPMTKEEFMAFYEALTTAEEAPLNSFEKEKYFEGCMPIEVMAKRGIKTMLYGPMKPVGLEYPEDYMGPRDGDFKTPYAVVQLRQDNAAGSLYNIVGFQTHLKWGEQKRVFQMIPGLENAEFVRYGVMHRNSYMDSPNLLKQTFQSKSNPNLFFAGQMTGVEGYVESAASGLVAGINAARLFKGEDEVIFPHTTAIGSLPYYVTHAESKHFQPMNVNFGIIKELEGPRIRDKKERYEKIAERALKDLQTFIDA.

13 to 18 (GAGLAG) lines the FAD pocket.

This sequence belongs to the MnmG family. TrmFO subfamily. Requires FAD as cofactor.

Its subcellular location is the cytoplasm. It catalyses the reaction uridine(54) in tRNA + (6R)-5,10-methylene-5,6,7,8-tetrahydrofolate + NADH + H(+) = 5-methyluridine(54) in tRNA + (6S)-5,6,7,8-tetrahydrofolate + NAD(+). The catalysed reaction is uridine(54) in tRNA + (6R)-5,10-methylene-5,6,7,8-tetrahydrofolate + NADPH + H(+) = 5-methyluridine(54) in tRNA + (6S)-5,6,7,8-tetrahydrofolate + NADP(+). Functionally, catalyzes the folate-dependent formation of 5-methyl-uridine at position 54 (M-5-U54) in all tRNAs. This is Methylenetetrahydrofolate--tRNA-(uracil-5-)-methyltransferase TrmFO from Streptococcus thermophilus (strain CNRZ 1066).